The sequence spans 192 residues: Glutaredoxin-C9 (192 aa).

The 103-residue stretch at 89–191 folds into the Glutaredoxin domain; the sequence is YERVARMASG…PLLKQAGALW (103 aa). C109 and C112 are disulfide-bonded. The Responsive for interaction with TGA factors signature appears at 189–192; it reads ALWL.

The protein belongs to the glutaredoxin family. CC-type subfamily.

The protein resides in the cytoplasm. It localises to the nucleus. Has a glutathione-disulfide oxidoreductase activity in the presence of NADPH and glutathione reductase. Reduces low molecular weight disulfides and proteins. The protein is Glutaredoxin-C9 (GRXC9) of Oryza sativa subsp. japonica (Rice).